The following is a 217-amino-acid chain: GTP cyclohydrolase 1 (217 aa).

Zn(2+) is bound by residues Cys-109, His-112, and Cys-180.

This sequence belongs to the GTP cyclohydrolase I family. Toroid-shaped homodecamer, composed of two pentamers of five dimers.

It catalyses the reaction GTP + H2O = 7,8-dihydroneopterin 3'-triphosphate + formate + H(+). It functions in the pathway cofactor biosynthesis; 7,8-dihydroneopterin triphosphate biosynthesis; 7,8-dihydroneopterin triphosphate from GTP: step 1/1. This chain is GTP cyclohydrolase 1, found in Vibrio vulnificus (strain CMCP6).